The chain runs to 1516 residues: MSSNVLPMYASTPSRAFAHSKLSSQLRAALADNSPAAPISPAPSGSALSLDESSGISDRDVHSSQEQTAHLSEVDVKSIHSSDSEDEPAQNPLPEVPANCGPPTIPLNVLLDFAIQHVYHEITVLAELMQRKTNDQGEQERKMSLVHFAHATRSQFLKLVALVKWIRISKRMDVCYSIDYLLDLQSQYFIDTADRLVAMTRGDLELARLPEYHIAPAIDVLVLGTYNRMPSKIKEAFIPPAKITPREQKLVTSRLNQLIESRLSRLSSGIPPNIKEIHINNGLATLLVPGEFEIKITLLGETEMTKWTLLNIKILVEDYELGMGLPLVHPLQLNQLHGVLQSRMNVSLNPIKEAFSFLHSFCVSLQLDVLFCQTSRLAAGRLRDNITIEKYDPKERVLVVGYWVKRSKSRRLTVGQVKCDAQYRVQIYEDPNDKLGGLKVRHFPHAPQLGRLDSGAGMLSIDRLLSETYVVRCKERLMRLRRILEAAEPRLEVKMTGISAPSLSLALLPDTSSKDEMMTVSVNSFCGKVLCNVHILSAEHEDVLAFGKALYSSQCSAHTIQMYLRKLRVALVIERYRRSVKALPVREVQEAELLPFAKECLGDAPAQRIILQFLRSEDYYLLVTFSPDEKAVVKTHIQLLEVVGDRAQFIQLEDDEMNGMHVKEAINQGTMRFSPSHKTSLQEECSREQRLAFAVATVEDRITYMYLAAELMKKGIGVDVRKDSAHVPGGLALHITDVKNVVPFEASEFFECCIRCCLRLDNRNRYTFQFEMCFENIPLVRDVPHGLPHRRDGEPKDRTSKDATWLQELNHINQSSPEKLVELIIHRLMRYLYMYKVVHQFSLAYEKHFKNYCNIEAYTFHKLVVSYGDNRDMLMILAFNVKSQAPGSSEDFFFLNFGQSMPHRQFNSTEIDWHQKPRWNPHSMMSQLMRDDLKETNDLVFTMHFLCETIRPLVAIGNFSRIRFQSQKSLSQLIGPDVHFPFRLKYHLYALDQTTLRLMQGNVILEIKLLEGCKIAVRDVSRYRPRCAGLFQLFSNIDSETTAIMNDEIAIPQSDNPQTAGPTMWTPEQFMDSLDERPEEIDPRMAITSQPILMSHDTIIKACDFKDTEGRITCPLDEYLCSISYLQRALLTLERMSPRATLNKNSSSNLSCGFVTIIDAKPDFIRFRASQMNGDGVNATSMVHYKIYLCPVAMTLKIRIEFEEGTNSAATADNLKTLTTYFEKVVFPCGDEYALQSYICLTRLTSFEATQSIANLMNVQMEHPPTSKCCVQLSLTYNNTSTKKLAPATKVDQPLQNIIFNVIVSQSRTSESFSVLRFIYRIKENFVVVPSANEKNKQMADEVNAETKTSGGNPIWNLVRLVMDRFNSGDWNPGNRDEPIISSVAPPTYVNPGSVAGPSSVAAPGSVSIQQPGSVLQPGSMMGPQSVNALQYGMHRQPMGGPQSMQMNPSSVGQPGSVGGPGSHQQHMMNPGSVGPGSVGGPGSVNPGSVGYPQWNPPSVGQSYHHPLHHQQYPPQ.

Disordered regions lie at residues 22–98 (LSSQ…EVPA) and 1434–1516 (MHRQ…YPPQ). Low complexity predominate over residues 34–47 (SPAAPISPAPSGSA). Basic and acidic residues predominate over residues 72 to 83 (SEVDVKSIHSSD). The span at 1463-1473 (SHQQHMMNPGS) shows a compositional bias: low complexity. Gly residues predominate over residues 1474–1483 (VGPGSVGGPG). The segment covering 1502–1516 (QSYHHPLHHQQYPPQ) has biased composition (low complexity).

The protein belongs to the Mediator complex subunit 14 family. Component of the Mediator complex.

Its subcellular location is the nucleus. Functionally, component of the Mediator complex, a coactivator involved in the regulated transcription of nearly all RNA polymerase II-dependent genes. Mediator functions as a bridge to convey information from gene-specific regulatory proteins to the basal RNA polymerase II transcription machinery. Mediator is recruited to promoters by direct interactions with regulatory proteins and serves as a scaffold for the assembly of a functional preinitiation complex with RNA polymerase II and the general transcription factors. Required for transcription in the embryo and for phosphorylation of the RNA polymerase II C-terminal domain repeat. This chain is Mediator of RNA polymerase II transcription subunit 14 (rgr-1), found in Caenorhabditis elegans.